A 228-amino-acid chain; its full sequence is Serum amyloid P-component (228 aa).

The first 20 residues, 1 to 20 (MDKLLLWMSVFTSLLSEAFA), serve as a signal peptide directing secretion. The Pentraxin (PTX) domain maps to 25 to 224 (NQKVFVFPRE…YVVIKPRMWD (200 aa)). An N-linked (GlcNAc...) asparagine glycan is attached at asparagine 52. An intrachain disulfide couples cysteine 56 to cysteine 115. Aspartate 78, asparagine 79, glutamate 156, glutamine 157, aspartate 158, and glutamine 168 together coordinate Ca(2+).

Belongs to the pentraxin family. As to quaternary structure, homopentamer. Pentraxin (or pentaxin) have a discoid arrangement of 5 non-covalently bound subunits. Ca(2+) is required as a cofactor.

It localises to the secreted. This Rattus norvegicus (Rat) protein is Serum amyloid P-component (Apcs).